Consider the following 135-residue polypeptide: L-ectoine synthase (135 aa).

The protein belongs to the ectoine synthase family.

The catalysed reaction is (2S)-4-acetamido-2-aminobutanoate = L-ectoine + H2O. It functions in the pathway amine and polyamine biosynthesis; ectoine biosynthesis; L-ectoine from L-aspartate 4-semialdehyde: step 3/3. In terms of biological role, catalyzes the circularization of gamma-N-acetyl-alpha,gamma-diaminobutyric acid (ADABA) to ectoine (1,4,5,6-tetrahydro-2-methyl-4-pyrimidine carboxylic acid), which is an excellent osmoprotectant. In Saccharopolyspora erythraea (strain ATCC 11635 / DSM 40517 / JCM 4748 / NBRC 13426 / NCIMB 8594 / NRRL 2338), this protein is L-ectoine synthase.